The following is a 320-amino-acid chain: Aspartate carbamoyltransferase catalytic subunit (320 aa).

Residues R70 and T71 each coordinate carbamoyl phosphate. K98 contacts L-aspartate. 3 residues coordinate carbamoyl phosphate: R120, H150, and Q153. R184 and R239 together coordinate L-aspartate. 2 residues coordinate carbamoyl phosphate: G280 and P281.

It belongs to the aspartate/ornithine carbamoyltransferase superfamily. ATCase family. Heterododecamer (2C3:3R2) of six catalytic PyrB chains organized as two trimers (C3), and six regulatory PyrI chains organized as three dimers (R2).

The catalysed reaction is carbamoyl phosphate + L-aspartate = N-carbamoyl-L-aspartate + phosphate + H(+). It participates in pyrimidine metabolism; UMP biosynthesis via de novo pathway; (S)-dihydroorotate from bicarbonate: step 2/3. Catalyzes the condensation of carbamoyl phosphate and aspartate to form carbamoyl aspartate and inorganic phosphate, the committed step in the de novo pyrimidine nucleotide biosynthesis pathway. In Xylella fastidiosa (strain Temecula1 / ATCC 700964), this protein is Aspartate carbamoyltransferase catalytic subunit.